We begin with the raw amino-acid sequence, 356 residues long: Peptide chain release factor 1 (356 aa).

The residue at position 233 (Gln-233) is an N5-methylglutamine.

The protein belongs to the prokaryotic/mitochondrial release factor family. Methylated by PrmC. Methylation increases the termination efficiency of RF1.

The protein resides in the cytoplasm. Functionally, peptide chain release factor 1 directs the termination of translation in response to the peptide chain termination codons UAG and UAA. The sequence is that of Peptide chain release factor 1 from Symbiobacterium thermophilum (strain DSM 24528 / JCM 14929 / IAM 14863 / T).